We begin with the raw amino-acid sequence, 695 residues long: NADPH--cytochrome P450 reductase (695 aa).

At 1 to 8 (MAQLDTLD) the chain is on the lumenal side. Residues 9 to 31 (LVVLAVLLVGSVAYFTKGTYWAV) traverse the membrane as a helical segment. The Cytoplasmic portion of the chain corresponds to 32 to 695 (AKDPYASTGP…SGSYQEDVWS (664 aa)). Residues 66–221 (CVIFYGSQTG…DFLAWKEPMW (156 aa)) form the Flavodoxin-like domain. FMN is bound by residues 72–77 (SQTGTA), 123–126 (ATYG), 169–178 (LGNNTYEHYN), and Asp-204. The region spanning 277-538 (HNPFIAPIAE…HVRHSNFKLP (262 aa)) is the FAD-binding FR-type domain. Position 296 (Arg-296) interacts with NADP(+). Residues 451-454 (RYYS), 469-471 (TAV), and 486-489 (GVTT) each bind FAD. NADP(+) contacts are provided by residues Thr-552, 614 to 615 (SR), 620 to 624 (KVYVQ), and Glu-656. Trp-694 lines the FAD pocket.

It belongs to the NADPH--cytochrome P450 reductase family. In the N-terminal section; belongs to the flavodoxin family. The protein in the C-terminal section; belongs to the flavoprotein pyridine nucleotide cytochrome reductase family. It depends on FAD as a cofactor. FMN is required as a cofactor.

The protein resides in the endoplasmic reticulum membrane. The protein localises to the mitochondrion outer membrane. It is found in the cell membrane. The catalysed reaction is 2 oxidized [cytochrome P450] + NADPH = 2 reduced [cytochrome P450] + NADP(+) + H(+). Its function is as follows. This enzyme is required for electron transfer from NADP to cytochrome P450 in microsomes. It can also provide electron transfer to heme oxygenase and cytochrome B5. Involved in ergosterol biosynthesis. The sequence is that of NADPH--cytochrome P450 reductase from Aspergillus niger (strain ATCC MYA-4892 / CBS 513.88 / FGSC A1513).